The chain runs to 363 residues: Cytoplasmic envelopment protein 2 (363 aa).

Belongs to the herpesviridae cytoplasmic envelopment protein 2 family. As to quaternary structure, interacts with cytoplasmic envelopment protein 3 and with the capsid.

The protein localises to the virion tegument. It is found in the host cytoplasm. It localises to the host nucleus. Plays a critical role in cytoplasmic virus egress. Participates in the final step of tegumentation and envelope acquisition within the host cytoplasm by directly interacting with the capsid. Upon virion binding to target cell, a signaling cascade is triggered to disrupt the interaction with the capsid, thereby preparing capsid uncoating. In Varicella-zoster virus (strain Dumas) (HHV-3), this protein is Cytoplasmic envelopment protein 2 (44).